The following is a 2715-amino-acid chain: MNNKFIIFSLLLALVASQTYSLTSCTCAQLLSEGDCIKNVSLGCSWDTTKKTCGVSTTPVTPTVTYAAYCDTFAETDCPKAKPCTDCGNYAACAWVESKCTFFTGCTPFAKTLDSECQAISNRCITDGTHCVEVDACSTYKKQLPCAKNAAGSLCYWDTTNNTCVDANTCDKLPATFATDKDCRDVISTCTTKTGGGCVDSGNNCSDQTLEIQCVWNKLKTTSCYWDGAACKDRICDNAPTSLTTDDACKTFRTDGTCTTKANGGCVTRTTCAAATIQASCIKNSSGGDCYWTGTACVDKACANTPTTIATNSACAGFVTGCITKSGGGCVVNGACSVANVQAACVKNPSNFDCIWDTTCKEKTCANASTTNNTHDLCTSYLSTCTVKSGGGCQNRTCANAPTTMTTNDACEAYFTGNNCITKSGGGCVTNTTCAAITLEAACVKNSSGSTCFWDTASSSCKDKTCVNAPATNTTHDLCQPFLNTCTVNSTSAGCVEKTCENSLVLAICDKDTSSRACIWKGKCYKKQCVLASSATTTHADCQTYHSTCTLSNSGTGCVPLPLKCEAITIEAACNLKANGQPCGWNGSQCIDKACSTASKTFTTTSQCTGHISTCVANNPVTVNGSLTIQGCQDLPTTCARRKSSENCEITRVGFPTCLWVSSSTSCVEKSCATASTVGTTGALSAGGFTFSGCQTYLNTCISNNTADGCIAKPSSCSSLVSSNCRDGSKASGDCYWNGSSCVDKTCANIIQTTHNSCNTTFNQCTVNNGGTACQTLATACTSYSTQENCKFTSTNKNCVWTGLACRNATCADAPDTTAYDSDTECLAYPTPSETCTVVYKVGAQGCVSKSANCSDYMTSAQCHKTLTNLTANDDCKWIVDRCYALSSFATGACTTFKGTKTMCEGYRAGCTNTVGAASSASCTLDCTLKTGSGLTFADCQALDSTCSVKKDGTGCIAIQSTCAGYGSTAANCFRSSASGTAGYCAMNTNCQSVTSAAECAFVTGLTGLDHSKCQLYHSSCTSLKDGTGCQEYKTTCSGYAATNNCATSGQGKCFFDVECLRFSNCASITGTGLTTAICGTYDAGCVANVNGTACQEKLATCDLYLTQNSCSTSAAAATADKCAWSGTACLAVTTVGTHCPYVTGTGLTDLICAAYNANCTANKAGTACQEKKATCNLYTTEATCSTSAAAATADKCAWSGAACLAVTTVATECAYVTGTGLTDLICAAYNANCTANKAGTACQEKKATCNLYTTEATCSTSAAAATADKCAWSGAACLAVTTVATECAYVTGTGLTNAICAAYNANCTANKAGTACQEKKATCNLYTTEATCSTSAAAATADKCAWSGAACLAVTTVATECAYVTGTGLTNAICAAYNANCTANKAGTACQEKKATCNLYTTEATCSTSAAAATADKCAWSGAACLAVTTVATECAYVTGTGLTKAICATYNAGCINLKDGTGCQEAKANCKDYTTSNKCTAQTTSTLSCLWIDNSCYPVTDLNCSVITGLGFVHAQCQAYSTGCTSVSDGSKCQDFKSTCEQYPGTTLGCTKTASTKCYLQGSACITISNVATDCAKITGSAGTITFEICQSYNTGCSVNRARSACVQQQAQCSGYTSAMTSCYKSGAGLCIASTNTDTACVAATAATCDAVYLGAGNYSSANCNEMKAGCTNNGTTACVAKTCANAAGITFNHTNCNSYLNTCTVNSGNSACQTMASKCADQTQASCLYSVEGECVVVGTSCVRKTCDTAATDATRDDDTECSTYQQSCTVARLGACQARAACATYKSSLQCKFNTSGGKCFWNPTNKTCVDLNCGNIEATTLYDTHNECVAVDATLACTVRATNGAAAQGCMARGACASYTIEEQCKTNASNGVCVWNTNANLPAPACQDKSCTSAPTSTTTHNDCYAYYNTATVKCTVVATPSNSGGNPTLGGCQQTAACSSYIDKEQCQINANGDPCGWNGTQCADKSCATASATADYDDDTKCRAYITNKCTVSDSGQGCVEIPATCETMTQKQCYYNKAGDPCYWTGTACITKSCDNAPDATATADECNTYLAGCTLNNVKCKTKVCEDFAFATDALCKQAISTCTTNGTNCVTRGTCFQALSQAGCVTSSTNQQCEWIPAVLNASNVITSPAYCTIKNCSTAPITLTSEAACAGYFTNCTTKNGGGCVTKSTCSAVTIDVACTTALNGTVCAWDSAQNKCRDKDCQDFSGTTHAACQAQRAGCTAGAGGKCARVQNCEQTSVRAACIEGTNGPCLWIDKYQNTDGTKGACFRYTSCKSLNWNNDSSCKWISNKCTTNGSNCVGITLCSETNTDGGCVTGYDGACIQSVPDLNSSDPKVCKPYTSCADAFYTTHSDCQIASSKCTTNGTTGCIALGSCSSYTVQAGCYFNDKGTLYTSGVITSTGICTWDTTSSSCRDQSCADLTGTTHATCSSQLSTCTSDGTTCLLKGACTSYTTQTACTTAVGSDGACYWELASATNNNTAKCRLLTCADIQNGTATNVCSVALSTCVSNGTACIPKANCSTYTSKVACNSGGLDGICVFTQSTATGAAAGTGTCALMTACTVANNDQTACQAARDRCSWTAASGTRATAVASKCATHTCATNQATNGACTRFLNWDKKTQQVCTLVSGACTATDPSSFSSNDCFLVSGYTYTCNASTSKCGVCTAVVVQPNTTDNNTNTTDNNTTTDSGYILGLSIVLGYLMF.

The signal sequence occupies residues 1 to 20; sequence MNNKFIIFSLLLALVASQTY. PSA repeat units lie at residues 111 to 171, 177 to 237, 243 to 303, 309 to 366, 372 to 404, 405 to 467, 473 to 530, 536 to 596, 602 to 673, 688 to 748, 752 to 812, 820 to 895, 934 to 1001, 1008 to 1067, 1073 to 1141, 1147 to 1215, 1221 to 1289, 1295 to 1363, 1369 to 1437, 1443 to 1507, 1513 to 1578, 1586 to 1652, 1693 to 1751, 1759 to 1819, 1827 to 1898, 1904 to 1976, 1984 to 2044, 2080 to 2149, 2155 to 2215, 2219 to 2286, 2290 to 2355, 2359 to 2430, 2434 to 2500, and 2505 to 2573; these read KTLD…NTCD, FATD…RICD, LTTD…KACA, IATN…KTCA, NNTHDLCTSYLSTCTVKSGGGCQNRTCANAPTT, MTTN…KTCV, NTTH…KQCV, TTTH…KACS, FTTT…KSCA, GFTF…KTCA, QTTH…ATCA, YDSD…GACT, GLTF…AECA, GLDH…SNCA, GLTT…THCP, GLTD…TECA, GLTN…TECA, GLTK…LNCS, GFVH…TDCA, TITF…ATCD, TFNH…KTCD, RDDD…LNCG, YDTH…KSCT, TTTH…KSCA, YDDD…KSCD, FATD…KNCS, LTSE…KDCQ, GTTH…TSCK, WNND…TSCA, YTTH…QSCA, GTTH…LTCA, and GTAT…TACT.

The protein localises to the cell membrane. Functionally, this protein is the surface antigen or immobilization antigen of Paramecium primaurelia. The chain is G surface protein, allelic form 156 (156G) from Paramecium primaurelia.